The sequence spans 130 residues: Phosphoribosyl-AMP cyclohydrolase 1 (130 aa).

Position 77 (Asp77) interacts with Mg(2+). Cys78 contributes to the Zn(2+) binding site. Mg(2+) contacts are provided by Asp79 and Asp81. Residues Cys95 and Cys102 each contribute to the Zn(2+) site.

It belongs to the PRA-CH family. As to quaternary structure, homodimer. It depends on Mg(2+) as a cofactor. Requires Zn(2+) as cofactor.

It localises to the cytoplasm. The enzyme catalyses 1-(5-phospho-beta-D-ribosyl)-5'-AMP + H2O = 1-(5-phospho-beta-D-ribosyl)-5-[(5-phospho-beta-D-ribosylamino)methylideneamino]imidazole-4-carboxamide. The protein operates within amino-acid biosynthesis; L-histidine biosynthesis; L-histidine from 5-phospho-alpha-D-ribose 1-diphosphate: step 3/9. In terms of biological role, catalyzes the hydrolysis of the adenine ring of phosphoribosyl-AMP. This chain is Phosphoribosyl-AMP cyclohydrolase 1, found in Pseudomonas fluorescens (strain ATCC BAA-477 / NRRL B-23932 / Pf-5).